The sequence spans 855 residues: DNA mismatch repair protein MutS (855 aa).

616–623 (GPNMGGKS) lines the ATP pocket.

It belongs to the DNA mismatch repair MutS family.

Its function is as follows. This protein is involved in the repair of mismatches in DNA. It is possible that it carries out the mismatch recognition step. This protein has a weak ATPase activity. The protein is DNA mismatch repair protein MutS of Salmonella paratyphi A (strain ATCC 9150 / SARB42).